Consider the following 470-residue polypeptide: MKTIAIIGKPNVGKSSLFNRLAKERIAITSDVSGTTRDIKKQVIEIEGNEVLLVDTGGIELKETGLFGKVRELALRAAKEADVVLYMVDGKMRPQDDDISLFRALHRENEHLFLVVNKIDNDKEKERGWEFAEFGAEKLLFISVSHNRGVGALQREIADVLGLEAPQEIVLSEDDEEDLEEYLVSLEEEEIEEIEEAPSEIRVGIIGKVNVGKSSLLNALLGSERSVVSDVAGTTIDPVDESMEIEGQKVLFVDTAGIRRRGKIEGIEKYALDRTQKALEKADIALLVLDCSLPFADLDEKIGGLVDKFSLGVIVVLNKWDIRSREFKEVEKEVRHRFKYLEHAPLVTVSAQNGRHIDMLKEKILKVYENFSRRIPTSILNKTIMEASARHPLPSDHGKIVRIYYATQYGVCPPQISLVMNRPNSLHFSYKRYVVNFLRDRFDFEGSPILIRARKRGEKLQDEIEALGED.

2 consecutive EngA-type G domains span residues 2–165 (KTIA…GLEA) and 201–372 (IRVG…ENFS). Residues 8 to 15 (GKPNVGKS), 55 to 59 (DTGGI), 117 to 120 (NKID), 207 to 214 (GKVNVGKS), 254 to 258 (DTAGI), and 318 to 321 (NKWD) each bind GTP. The KH-like domain occupies 373–457 (RRIPTSILNK…PILIRARKRG (85 aa)).

The protein belongs to the TRAFAC class TrmE-Era-EngA-EngB-Septin-like GTPase superfamily. EngA (Der) GTPase family. Associates with the 50S ribosomal subunit.

In terms of biological role, GTPase that plays an essential role in the late steps of ribosome biogenesis. The sequence is that of GTPase Der from Wolinella succinogenes (strain ATCC 29543 / DSM 1740 / CCUG 13145 / JCM 31913 / LMG 7466 / NCTC 11488 / FDC 602W) (Vibrio succinogenes).